Here is a 492-residue protein sequence, read N- to C-terminus: Probable G-protein coupled receptor Mth-like 8 (492 aa).

The signal sequence occupies residues 1 to 21 (MAQFCILGVLLILSGTHCSWG). The Extracellular portion of the chain corresponds to 22-218 (FHEETHYPCA…FVLGVREWTY (197 aa)). Cystine bridges form between Cys30/Cys82, Cys84/Cys89, Cys93/Cys184, and Cys94/Cys107. N-linked (GlcNAc...) asparagine glycosylation is found at Asn37 and Asn51. Asn129, Asn169, and Asn192 each carry an N-linked (GlcNAc...) asparagine glycan. The chain crosses the membrane as a helical span at residues 219 to 239 (AICLLIAILSMFIVLMVYLMC). Residues 240 to 245 (SEMRNS) are Cytoplasmic-facing. A helical membrane pass occupies residues 246–266 (FYGVAIKAYAICMILGYALLA). Residues 267–282 (YLTLHNPANLSNAACR) are Extracellular-facing. A glycan (N-linked (GlcNAc...) asparagine) is linked at Asn275. The helical transmembrane segment at 283 to 303 (ILPSLALMNLVLSFYILSFIA) threads the bilayer. Residues 304–317 (FKLYLSFYGVVFTK) are Cytoplasmic-facing. Residues 318-338 (LMFWLIFTPIVLVAVGWSFFV) form a helical membrane-spanning segment. At 339–362 (GFSYYGSRLIFGGDTCWFDPRNWS) the chain is on the extracellular side. N-linked (GlcNAc...) asparagine glycosylation is present at Asn360. The helical transmembrane segment at 363 to 383 (VMIYFYAPVFVACAISGFFYV) threads the bilayer. Residues 384–411 (LSQIYIRDQPDIETEKSFESIEKNRFKS) are Cytoplasmic-facing. A helical membrane pass occupies residues 412–432 (FWKYFGYTAVVWVVCICSFAF). Residues 433–441 (NYYWENRSH) are Extracellular-facing. An N-linked (GlcNAc...) asparagine glycan is attached at Asn438. A helical membrane pass occupies residues 442–462 (LNYAVSFCMAFHGFAALYALI). Topologically, residues 463–492 (GKNQQIQNFLRRIDNGEDTCENSVPLSSFG) are cytoplasmic.

The protein belongs to the G-protein coupled receptor 2 family. Mth subfamily.

The protein localises to the cell membrane. The polypeptide is Probable G-protein coupled receptor Mth-like 8 (mthl8) (Drosophila melanogaster (Fruit fly)).